A 375-amino-acid chain; its full sequence is Antichymotrypsin-2 (375 aa).

This sequence belongs to the serpin family. Hemolymph.

The protein resides in the secreted. The polypeptide is Antichymotrypsin-2 (Bombyx mori (Silk moth)).